The chain runs to 216 residues: Uracil phosphoribosyltransferase (216 aa).

30-34 is a GTP binding site; sequence KTLVR. 5-phospho-alpha-D-ribose 1-diphosphate contacts are provided by residues R80, R105, and 140-148; that span reads DPMIATAST. Uracil-binding positions include I203 and 208–210; that span reads GDA. D209 provides a ligand contact to 5-phospho-alpha-D-ribose 1-diphosphate.

Belongs to the UPRTase family. It depends on Mg(2+) as a cofactor.

It catalyses the reaction UMP + diphosphate = 5-phospho-alpha-D-ribose 1-diphosphate + uracil. It functions in the pathway pyrimidine metabolism; UMP biosynthesis via salvage pathway; UMP from uracil: step 1/1. Its activity is regulated as follows. Allosterically activated by GTP. Functionally, catalyzes the conversion of uracil and 5-phospho-alpha-D-ribose 1-diphosphate (PRPP) to UMP and diphosphate. This Sulfurisphaera tokodaii (strain DSM 16993 / JCM 10545 / NBRC 100140 / 7) (Sulfolobus tokodaii) protein is Uracil phosphoribosyltransferase.